Here is a 521-residue protein sequence, read N- to C-terminus: Probable feruloyl esterase B (521 aa).

A signal peptide spans 1 to 17; sequence MKVSSLLSVALPGAALA. Disulfide bonds link Cys26-Cys72 and Cys61-Cys111. N-linked (GlcNAc...) asparagine glycosylation is found at Asn37, Asn51, Asn77, Asn95, Asn144, and Asn177. 3 cysteine pairs are disulfide-bonded: Cys184-Cys438, Cys253-Cys270, and Cys279-Cys288. The active-site Acyl-ester intermediate is Ser185. Positions 254, 257, 259, 261, and 263 each coordinate Ca(2+). Asn284, Asn347, Asn352, and Asn378 each carry an N-linked (GlcNAc...) asparagine glycan. Catalysis depends on charge relay system residues Asp397 and His437. Residues Asn488 and Asn511 are each glycosylated (N-linked (GlcNAc...) asparagine). Cys498 and Cys520 are joined by a disulfide.

This sequence belongs to the tannase family.

Its subcellular location is the secreted. The enzyme catalyses feruloyl-polysaccharide + H2O = ferulate + polysaccharide.. Involved in degradation of plant cell walls. Hydrolyzes the feruloyl-arabinose ester bond in arabinoxylans as well as the feruloyl-galactose and feruloyl-arabinose ester bonds in pectin. The chain is Probable feruloyl esterase B (faeB) from Aspergillus niger (strain ATCC MYA-4892 / CBS 513.88 / FGSC A1513).